A 412-amino-acid chain; its full sequence is Mannose-1-phosphate guanylyltransferase regulatory subunit alpha (412 aa).

Residues 6–259 (TKAIILVGGP…VGFWRQIKNA (254 aa)) are substrate-binding domain. GDP-alpha-D-mannose is bound by residues E88 and Q255. The hexapeptide repeat domain stretch occupies residues 281 to 412 (LKKGNNIIGN…DRNYNNEIIL (132 aa)).

It belongs to the transferase hexapeptide repeat family. As to quaternary structure, component of the GMPPA-GMPPB mannose-1-phosphate guanylyltransferase complex composed of 4 gmppA subunits and 8 gmppB subunits; the complex is organized into three layers, a central layer made up of 2 gmppA dimers sandwiched between two layers each made up of 2 gmppB dimers.

Functionally, regulatory subunit of the GMPPA-GMPPB mannose-1-phosphate guanylyltransferase complex; reduces the catalytic activity of GMPPB when part of the complex. Mediates allosteric feedback inhibition of GMPPB catalytic activity upon binding GDP-alpha-D-mannose. Together with GMPPB regulates GDP-alpha-D-mannose levels. This Dictyostelium discoideum (Social amoeba) protein is Mannose-1-phosphate guanylyltransferase regulatory subunit alpha (gmppA).